The following is a 585-amino-acid chain: Folylpolyglutamate synthase, mitochondrial (585 aa).

The transit peptide at 1–39 (MSRARCHALFLAAVSPRGATTRVAVRRGLSAWPVLQEPD) directs the protein to the mitochondrion. ATP is bound at residue 103–106 (GKGS). Residues S127, E198, and H226 each coordinate Mg(2+). 2 residues coordinate ATP: R361 and D375. Residues 477 to 497 (EEQVSPDPWSTPGQEQDGPAS) are disordered. S537 is modified (phosphoserine).

The protein belongs to the folylpolyglutamate synthase family. In terms of assembly, monomer. A monovalent cation is required as a cofactor.

Its subcellular location is the mitochondrion inner membrane. It localises to the mitochondrion matrix. The protein resides in the cytoplasm. It catalyses the reaction (6S)-5,6,7,8-tetrahydrofolyl-(gamma-L-Glu)(n) + L-glutamate + ATP = (6S)-5,6,7,8-tetrahydrofolyl-(gamma-L-Glu)(n+1) + ADP + phosphate + H(+). It functions in the pathway cofactor biosynthesis; tetrahydrofolylpolyglutamate biosynthesis. Its function is as follows. Catalyzes conversion of folates to polyglutamate derivatives allowing concentration of folate compounds in the cell and the intracellular retention of these cofactors, which are important substrates for most of the folate-dependent enzymes that are involved in one-carbon transfer reactions involved in purine, pyrimidine and amino acid synthesis. The protein is Folylpolyglutamate synthase, mitochondrial (FPGS) of Bos taurus (Bovine).